Reading from the N-terminus, the 373-residue chain is Erythronate-4-phosphate dehydrogenase (373 aa).

Ser45 and Thr66 together coordinate substrate. Asp146 and Thr175 together coordinate NAD(+). Arg208 is an active-site residue. Residue Asp232 participates in NAD(+) binding. Glu237 is a catalytic residue. His254 acts as the Proton donor in catalysis. Gly257 is an NAD(+) binding site. Tyr258 contributes to the substrate binding site.

The protein belongs to the D-isomer specific 2-hydroxyacid dehydrogenase family. PdxB subfamily. In terms of assembly, homodimer.

It localises to the cytoplasm. The enzyme catalyses 4-phospho-D-erythronate + NAD(+) = (R)-3-hydroxy-2-oxo-4-phosphooxybutanoate + NADH + H(+). It functions in the pathway cofactor biosynthesis; pyridoxine 5'-phosphate biosynthesis; pyridoxine 5'-phosphate from D-erythrose 4-phosphate: step 2/5. Its function is as follows. Catalyzes the oxidation of erythronate-4-phosphate to 3-hydroxy-2-oxo-4-phosphonooxybutanoate. This Serratia proteamaculans (strain 568) protein is Erythronate-4-phosphate dehydrogenase.